The primary structure comprises 55 residues: Large ribosomal subunit protein bL33 (55 aa).

Belongs to the bacterial ribosomal protein bL33 family.

This Methylacidiphilum infernorum (isolate V4) (Methylokorus infernorum (strain V4)) protein is Large ribosomal subunit protein bL33.